Here is a 317-residue protein sequence, read N- to C-terminus: Pantothenate kinase (317 aa).

99-106 (GSVSVGKS) lines the ATP pocket.

It belongs to the prokaryotic pantothenate kinase family.

Its subcellular location is the cytoplasm. It carries out the reaction (R)-pantothenate + ATP = (R)-4'-phosphopantothenate + ADP + H(+). It functions in the pathway cofactor biosynthesis; coenzyme A biosynthesis; CoA from (R)-pantothenate: step 1/5. The chain is Pantothenate kinase from Mannheimia succiniciproducens (strain KCTC 0769BP / MBEL55E).